A 252-amino-acid chain; its full sequence is ATP synthase subunit a (252 aa).

Transmembrane regions (helical) follow at residues 33 to 53 (GQVFITTWFVMALLIAVAFVA), 92 to 112 (VPFVGTLFLFIFVCNWSGALV), 130 to 150 (DINTTVALALLVSLAYFYAGL), 196 to 216 (LVVSVLVLLVPLFVPLPVMVL), and 217 to 237 (GLFTSAIQALVFATLAATYIG).

Belongs to the ATPase A chain family. As to quaternary structure, F-type ATPases have 2 components, CF(1) - the catalytic core - and CF(0) - the membrane proton channel. CF(1) has five subunits: alpha(3), beta(3), gamma(1), delta(1), epsilon(1). CF(0) has four main subunits: a, b, b' and c.

Its subcellular location is the cellular thylakoid membrane. Key component of the proton channel; it plays a direct role in the translocation of protons across the membrane. This is ATP synthase subunit a from Thermosynechococcus vestitus (strain NIES-2133 / IAM M-273 / BP-1).